Here is a 187-residue protein sequence, read N- to C-terminus: Large ribosomal subunit protein bL17 (187 aa).

It belongs to the bacterial ribosomal protein bL17 family. Part of the 50S ribosomal subunit. Contacts protein L32.

The polypeptide is Large ribosomal subunit protein bL17 (Rhodococcus opacus (strain B4)).